The following is a 282-amino-acid chain: MASLRFSVTFPALLSLLLLSLWVVEAYTSRKLISNNEQEGQNISHLFKDGEFEDPTMYMFFKISDLKLGTKLPIYFNKNDLRKVPPLLTRQEADLIPFSESNLDFLLNHFSISKDSPQGKAMKETLKRCDFKAIEGEYKFCGTSLESMLDLAKKTIASNADLKVMTTKVMVPDQNRISYALHNYTFAEVPKELDGIKVLGCHRMPYPYVVYYCHGHKSGTKVFEVNLMSDDGIQLVVGPAVCHMDTSMWNADHVAFKVLKIEPRSAPVCHFFPLDNIVWVSK.

An N-terminal signal peptide occupies residues 1–26 (MASLRFSVTFPALLSLLLLSLWVVEA). The 223-residue stretch at 60–282 (FFKISDLKLG…PLDNIVWVSK (223 aa)) folds into the BURP domain.

As to expression, expressed in the radicle and cotyledon of germinating seeds 2 days post-imbibition (DPI), in stems and roots of 30-DPI young plants and in floral buds, but not in fully open flowers or leaves. Expressed in the embryo and seed coat tissues of developing seeds. The protein accumulates only in seeds and only long after transcript accumulation becomes evident.

The protein localises to the protein storage vacuole. The polypeptide is BURP domain-containing protein BNM2A (Brassica napus (Rape)).